The sequence spans 21 residues: Peptide PGLa-B2 (21 aa).

Residue L21 is modified to Leucine amide.

As to expression, expressed by the skin glands.

It localises to the secreted. Has antimicrobial activity against Gram-negative bacterium E.coli ATCC 25922 (MIC=25 uM), Gram-positive bacterium S.auerus ATCC 25923 (MIC=50 uM) and against fungus C.albicans ATCC 90028 (MIC=25 uM). Has some hemolytic activity against human erythrocytes at high concentration. The chain is Peptide PGLa-B2 from Xenopus borealis (Kenyan clawed frog).